The sequence spans 354 residues: MIRIAIDCMGGDFGLPVTIPAAIEFARQFPDSRLLLVGLPEAIEAALAEHKAAPRDRFEIVPATEVVSMDDPVEIALRRKKDSSMRLAAQAVKDGRADACVSAGNTGAWMAISRYVLKTLDGIDRPAIATSIPNQTGRATTVLDLGANVDCTAEHLLQFAIMGTALTQAVDHRDNPTVGLLNIGEEVIKGNEVVKEAAELLRRSPLNFRGNVEGNDIFKGTVDVVVCDGFVGNVVLKSVEGLAKMLSSVIREEFQRNLVTLLAGAIAKPVLNRLRNRVDNRRYNGAALLGLRGVVIKSHGSADVYAYGFALQRAREAVVSKLQERTAQAVALITQRVQMGEAAAGEPEAAGDTV.

Belongs to the PlsX family. In terms of assembly, homodimer. Probably interacts with PlsY.

The protein resides in the cytoplasm. The catalysed reaction is a fatty acyl-[ACP] + phosphate = an acyl phosphate + holo-[ACP]. Its pathway is lipid metabolism; phospholipid metabolism. In terms of biological role, catalyzes the reversible formation of acyl-phosphate (acyl-PO(4)) from acyl-[acyl-carrier-protein] (acyl-ACP). This enzyme utilizes acyl-ACP as fatty acyl donor, but not acyl-CoA. The polypeptide is Phosphate acyltransferase (Bordetella petrii (strain ATCC BAA-461 / DSM 12804 / CCUG 43448)).